Consider the following 215-residue polypeptide: Riboflavin synthase (215 aa).

2 Lumazine-binding repeats span residues 1 to 96 (MFTG…FGGH) and 97 to 193 (FVSG…YRFL). 2,4-dihydroxypteridine contacts are provided by residues 4 to 6 (GII), 47 to 49 (CLT), 61 to 66 (DVMPET), 100 to 102 (GHV), Lys135, 144 to 146 (SLT), and 158 to 163 (SLIPHT).

As to quaternary structure, homotrimer. Can interact with 6,7-dimethyl-8-ribityllumazine synthase, forming a lumazine synthase/riboflavin synthase complex, also designated as 'heavy riboflavin synthase complex', which consists of a trimer of riboflavin synthase enclosed within an icosahedral structure composed of 60 subunits of 6,7-dimethyl-8-ribityllumazine synthase.

The catalysed reaction is 2 6,7-dimethyl-8-(1-D-ribityl)lumazine + H(+) = 5-amino-6-(D-ribitylamino)uracil + riboflavin. It participates in cofactor biosynthesis; riboflavin biosynthesis; riboflavin from 2-hydroxy-3-oxobutyl phosphate and 5-amino-6-(D-ribitylamino)uracil: step 2/2. With respect to regulation, is activated by sulfite ions. Its function is as follows. Catalyzes the dismutation of two molecules of 6,7-dimethyl-8-ribityllumazine, resulting in the formation of riboflavin and 5-amino-6-(D-ribitylamino)uracil. In Bacillus subtilis (strain 168), this protein is Riboflavin synthase (ribE).